A 549-amino-acid chain; its full sequence is Glucose-6-phosphate isomerase (549 aa).

The Proton donor role is filled by E355. Residues H386 and K514 contribute to the active site.

The protein belongs to the GPI family.

The protein localises to the cytoplasm. The catalysed reaction is alpha-D-glucose 6-phosphate = beta-D-fructose 6-phosphate. The protein operates within carbohydrate biosynthesis; gluconeogenesis. It functions in the pathway carbohydrate degradation; glycolysis; D-glyceraldehyde 3-phosphate and glycerone phosphate from D-glucose: step 2/4. Functionally, catalyzes the reversible isomerization of glucose-6-phosphate to fructose-6-phosphate. The polypeptide is Glucose-6-phosphate isomerase (Sodalis glossinidius (strain morsitans)).